Consider the following 445-residue polypeptide: Tubulin beta chain (445 aa).

Q11, E69, S138, G142, T143, G144, N204, and N226 together coordinate GTP. E69 contacts Mg(2+). Positions 426-445 (QDATAEEEGEFEEEEGDVEA) are disordered. Positions 429-445 (TAEEEGEFEEEEGDVEA) are enriched in acidic residues.

Belongs to the tubulin family. As to quaternary structure, dimer of alpha and beta chains. A typical microtubule is a hollow water-filled tube with an outer diameter of 25 nm and an inner diameter of 15 nM. Alpha-beta heterodimers associate head-to-tail to form protofilaments running lengthwise along the microtubule wall with the beta-tubulin subunit facing the microtubule plus end conferring a structural polarity. Microtubules usually have 13 protofilaments but different protofilament numbers can be found in some organisms and specialized cells. Interacts with DCX/apicortin; the interaction stabilizes microtubule assembly. It depends on Mg(2+) as a cofactor.

Its subcellular location is the cytoplasm. It is found in the cytoskeleton. In terms of biological role, tubulin is the major constituent of microtubules, a cylinder consisting of laterally associated linear protofilaments composed of alpha- and beta-tubulin heterodimers. Microtubules grow by the addition of GTP-tubulin dimers to the microtubule end, where a stabilizing cap forms. Below the cap, tubulin dimers are in GDP-bound state, owing to GTPase activity of alpha-tubulin. This is Tubulin beta chain from Plasmodium falciparum.